Consider the following 68-residue polypeptide: Conotoxin reg3.14 (68 aa).

Positions 1-22 are cleaved as a signal peptide; that stretch reads MMSKLGVLLTICLLLFPLSVLP. Positions 23 to 52 are excised as a propeptide; sequence LDGDQPADQPAERMQDISAEQNPWFDPVKR. 3 disulfide bridges follow: Cys-53-Cys-68, Cys-54-Cys-64, and Cys-59-Cys-67.

It belongs to the conotoxin M superfamily. As to expression, expressed by the venom duct.

Its subcellular location is the secreted. The sequence is that of Conotoxin reg3.14 from Conus regius (Crown cone).